The sequence spans 169 residues: uncharacterized protein (169 aa).

This is an uncharacterized protein from Escherichia coli (strain K12).